Consider the following 364-residue polypeptide: Phospho-N-acetylmuramoyl-pentapeptide-transferase (364 aa).

Helical transmembrane passes span 3–23 (AILFGGGLALLVSLLGTRVAI), 51–71 (TMGGVVIILATVVGYFGAKLI), 80–100 (ALLLLFLLVGTGLVGFVDDFI), 116–136 (MIGLTVVALVFGILSLSSWLE), 154–174 (IGWITLPTVVVLLLIWLIIAA), 185–205 (LDGLATGASVMVFGAYMFVNI), 229–249 (PLDLAVVAAAITGACFGFLWW), 256–276 (IFMGDTGSLALGGALAGLAIL), 281–301 (LLLIILGGLFVMETVSVMLQV), and 341–361 (FWIITGICVAAGLGVFYAEWV).

Belongs to the glycosyltransferase 4 family. MraY subfamily. Mg(2+) serves as cofactor.

It localises to the cell membrane. The catalysed reaction is UDP-N-acetyl-alpha-D-muramoyl-L-alanyl-gamma-D-glutamyl-meso-2,6-diaminopimeloyl-D-alanyl-D-alanine + di-trans,octa-cis-undecaprenyl phosphate = di-trans,octa-cis-undecaprenyl diphospho-N-acetyl-alpha-D-muramoyl-L-alanyl-D-glutamyl-meso-2,6-diaminopimeloyl-D-alanyl-D-alanine + UMP. Its pathway is cell wall biogenesis; peptidoglycan biosynthesis. Its function is as follows. Catalyzes the initial step of the lipid cycle reactions in the biosynthesis of the cell wall peptidoglycan: transfers peptidoglycan precursor phospho-MurNAc-pentapeptide from UDP-MurNAc-pentapeptide onto the lipid carrier undecaprenyl phosphate, yielding undecaprenyl-pyrophosphoryl-MurNAc-pentapeptide, known as lipid I. The polypeptide is Phospho-N-acetylmuramoyl-pentapeptide-transferase (Nocardioides sp. (strain ATCC BAA-499 / JS614)).